The sequence spans 99 residues: A-type ATP synthase subunit F (99 aa).

It belongs to the V-ATPase F subunit family. In terms of assembly, has multiple subunits with at least A(3), B(3), C, D, E, F, H, I and proteolipid K(x).

The protein resides in the cell membrane. Its function is as follows. Component of the A-type ATP synthase that produces ATP from ADP in the presence of a proton gradient across the membrane. This chain is A-type ATP synthase subunit F, found in Methanococcus maripaludis (strain C7 / ATCC BAA-1331).